Here is a 416-residue protein sequence, read N- to C-terminus: LL-diaminopimelate aminotransferase (416 aa).

Residues Tyr-25 and Gly-52 each coordinate substrate. Pyridoxal 5'-phosphate is bound by residues Tyr-78, 115-116 (SK), Tyr-140, Asn-190, Tyr-221, and 248-250 (SFS). Positions 116, 140, and 190 each coordinate substrate. Lys-251 is subject to N6-(pyridoxal phosphate)lysine. Arg-259 is a binding site for pyridoxal 5'-phosphate.

Belongs to the class-I pyridoxal-phosphate-dependent aminotransferase family. As to quaternary structure, homodimer. Requires pyridoxal 5'-phosphate as cofactor.

Its subcellular location is the cytoplasm. It carries out the reaction (2S,6S)-2,6-diaminopimelate + 2-oxoglutarate = (S)-2,3,4,5-tetrahydrodipicolinate + L-glutamate + H2O + H(+). Its pathway is amino-acid biosynthesis; L-lysine biosynthesis via DAP pathway; LL-2,6-diaminopimelate from (S)-tetrahydrodipicolinate (aminotransferase route): step 1/1. Its function is as follows. Involved in the synthesis of meso-diaminopimelate (m-DAP or DL-DAP), required for both lysine and peptidoglycan biosynthesis. Catalyzes the direct conversion of tetrahydrodipicolinate to LL-diaminopimelate. This is LL-diaminopimelate aminotransferase (dapL) from Methanococcus maripaludis (strain DSM 14266 / JCM 13030 / NBRC 101832 / S2 / LL).